The chain runs to 230 residues: Urease accessory protein UreF (230 aa).

Belongs to the UreF family. As to quaternary structure, ureD, UreF and UreG form a complex that acts as a GTP-hydrolysis-dependent molecular chaperone, activating the urease apoprotein by helping to assemble the nickel containing metallocenter of UreC. The UreE protein probably delivers the nickel.

Its subcellular location is the cytoplasm. Functionally, required for maturation of urease via the functional incorporation of the urease nickel metallocenter. The chain is Urease accessory protein UreF from Cupriavidus metallidurans (strain ATCC 43123 / DSM 2839 / NBRC 102507 / CH34) (Ralstonia metallidurans).